The chain runs to 136 residues: Probable intron-encoded DNA endonuclease 3 (136 aa).

It belongs to the LAGLIDADG endonuclease family.

It is found in the mitochondrion. Functionally, mitochondrial DNA endonuclease involved in intron homing. The polypeptide is Probable intron-encoded DNA endonuclease 3 (hegI3) (Mycosarcoma maydis (Corn smut fungus)).